The sequence spans 134 residues: Small ribosomal subunit protein uS12 (134 aa).

The segment at 1–26 (MPTIQQLVRKGRESFADKSKSPALNS) is disordered. The span at 10–20 (KGRESFADKSK) shows a compositional bias: basic and acidic residues. Asp-89 bears the 3-methylthioaspartic acid mark. Residues 103 to 134 (DTAGVNGRTQRRSKYGAKRPKPGQAPAAKGKK) form a disordered region. Residues 111 to 123 (TQRRSKYGAKRPK) show a composition bias toward basic residues. Over residues 124-134 (PGQAPAAKGKK) the composition is skewed to low complexity.

Belongs to the universal ribosomal protein uS12 family. In terms of assembly, part of the 30S ribosomal subunit. Contacts proteins S8 and S17. May interact with IF1 in the 30S initiation complex.

Its function is as follows. With S4 and S5 plays an important role in translational accuracy. Functionally, interacts with and stabilizes bases of the 16S rRNA that are involved in tRNA selection in the A site and with the mRNA backbone. Located at the interface of the 30S and 50S subunits, it traverses the body of the 30S subunit contacting proteins on the other side and probably holding the rRNA structure together. The combined cluster of proteins S8, S12 and S17 appears to hold together the shoulder and platform of the 30S subunit. The sequence is that of Small ribosomal subunit protein uS12 from Porphyromonas gingivalis (strain ATCC BAA-308 / W83).